The following is a 354-amino-acid chain: S-adenosylmethionine:tRNA ribosyltransferase-isomerase (354 aa).

It belongs to the QueA family. As to quaternary structure, monomer.

It is found in the cytoplasm. It catalyses the reaction 7-aminomethyl-7-carbaguanosine(34) in tRNA + S-adenosyl-L-methionine = epoxyqueuosine(34) in tRNA + adenine + L-methionine + 2 H(+). It participates in tRNA modification; tRNA-queuosine biosynthesis. Functionally, transfers and isomerizes the ribose moiety from AdoMet to the 7-aminomethyl group of 7-deazaguanine (preQ1-tRNA) to give epoxyqueuosine (oQ-tRNA). In Salmonella schwarzengrund (strain CVM19633), this protein is S-adenosylmethionine:tRNA ribosyltransferase-isomerase.